A 377-amino-acid chain; its full sequence is uncharacterized protein (377 aa).

The next 2 membrane-spanning stretches (helical) occupy residues 23–43 (LKFI…FIAY) and 251–271 (GSFI…SISY).

The protein localises to the cell membrane. This is an uncharacterized protein from Methanocaldococcus jannaschii (strain ATCC 43067 / DSM 2661 / JAL-1 / JCM 10045 / NBRC 100440) (Methanococcus jannaschii).